Reading from the N-terminus, the 209-residue chain is MGKVHVYDHPLIQHKMTIMRKVETGTKQFRELVDEVSSLMAYEITRSLPLTDVEIETPVSVSTQKMIAGKKLGIVPILRAGLGMVDGFLKMMPNVKVGHIGLYRDPETLEPHEYYLKLPTDVTERDFIVVDPMLATGGSAVDAIASLKKHGAKSIKLACLCAAPEGVERVQAEHPDVEIYLAALDEKLNDHGYIVPGLGDAGDRLFGTK.

5-phospho-alpha-D-ribose 1-diphosphate-binding positions include Arg-79, Arg-104, and 131–139 (DPMLATGGS). Residues Ile-194 and 199 to 201 (GDA) each bind uracil. Asp-200 provides a ligand contact to 5-phospho-alpha-D-ribose 1-diphosphate.

It belongs to the UPRTase family. Mg(2+) serves as cofactor.

It catalyses the reaction UMP + diphosphate = 5-phospho-alpha-D-ribose 1-diphosphate + uracil. The protein operates within pyrimidine metabolism; UMP biosynthesis via salvage pathway; UMP from uracil: step 1/1. With respect to regulation, allosterically activated by GTP. In terms of biological role, catalyzes the conversion of uracil and 5-phospho-alpha-D-ribose 1-diphosphate (PRPP) to UMP and diphosphate. The chain is Uracil phosphoribosyltransferase from Exiguobacterium sp. (strain ATCC BAA-1283 / AT1b).